Reading from the N-terminus, the 50-residue chain is Sperm protamine P1 (50 aa).

This sequence belongs to the protamine P1 family. In terms of assembly, cross-linked by interchain disulfide bonds around the DNA-helix. As to expression, testis.

Its subcellular location is the nucleus. The protein localises to the chromosome. In terms of biological role, protamines substitute for histones in the chromatin of sperm during the haploid phase of spermatogenesis. They compact sperm DNA into a highly condensed, stable and inactive complex. The chain is Sperm protamine P1 (PRM1) from Saimiri sciureus (Common squirrel monkey).